The following is a 182-amino-acid chain: ATP synthase subunit delta (182 aa).

It belongs to the ATPase delta chain family. In terms of assembly, F-type ATPases have 2 components, F(1) - the catalytic core - and F(0) - the membrane proton channel. F(1) has five subunits: alpha(3), beta(3), gamma(1), delta(1), epsilon(1). F(0) has three main subunits: a(1), b(2) and c(10-14). The alpha and beta chains form an alternating ring which encloses part of the gamma chain. F(1) is attached to F(0) by a central stalk formed by the gamma and epsilon chains, while a peripheral stalk is formed by the delta and b chains.

It localises to the cell membrane. In terms of biological role, f(1)F(0) ATP synthase produces ATP from ADP in the presence of a proton or sodium gradient. F-type ATPases consist of two structural domains, F(1) containing the extramembraneous catalytic core and F(0) containing the membrane proton channel, linked together by a central stalk and a peripheral stalk. During catalysis, ATP synthesis in the catalytic domain of F(1) is coupled via a rotary mechanism of the central stalk subunits to proton translocation. This protein is part of the stalk that links CF(0) to CF(1). It either transmits conformational changes from CF(0) to CF(1) or is implicated in proton conduction. The protein is ATP synthase subunit delta of Lactobacillus johnsonii (strain CNCM I-12250 / La1 / NCC 533).